Reading from the N-terminus, the 187-residue chain is Elongation factor P (187 aa).

Belongs to the elongation factor P family.

The protein resides in the cytoplasm. The protein operates within protein biosynthesis; polypeptide chain elongation. Functionally, involved in peptide bond synthesis. Stimulates efficient translation and peptide-bond synthesis on native or reconstituted 70S ribosomes in vitro. Probably functions indirectly by altering the affinity of the ribosome for aminoacyl-tRNA, thus increasing their reactivity as acceptors for peptidyl transferase. The polypeptide is Elongation factor P (Desulforapulum autotrophicum (strain ATCC 43914 / DSM 3382 / VKM B-1955 / HRM2) (Desulfobacterium autotrophicum)).